Reading from the N-terminus, the 640-residue chain is Cytochrome P450 monooxygenase cyp1 (640 aa).

Asn-71 is a glycosylation site (N-linked (GlcNAc...) asparagine). Residues 120-139 form a helical membrane-spanning segment; the sequence is LLVFLVGLFLGTIYLLYRYW. N-linked (GlcNAc...) asparagine glycosylation occurs at Asn-350. Cys-572 is a heme binding site.

Belongs to the cytochrome P450 family. Heme is required as a cofactor.

The protein resides in the membrane. It participates in secondary metabolite biosynthesis. Cytochrome P450 monooxygenase; part of the gene cluster that mediates the biosynthesis of the glycolipid biosurfactant ustilagic acid (UA). UA is a secreted cellobiose glycolipid that is toxic for many microorganisms and confers biocontrol activity to U.maydis. UA consists of 15,16-dihydroxypalmitic or 2,15,16-trihydroxypalmitic acid, which is O-glycosidically linked to cellobiose at its terminal hydroxyl group. In addition, the cellobiose moiety is acetylated and acylated with a short-chain hydroxy fatty acid. UA biosynthesis starts with omega-hydroxylation of palmitic acid catalyzed by the cytochrome P450 monooxygenase cyp1. Terminal hydroxylation of palmitic acid precedes subterminal hydroxylation catalyzed by the cytochrome P450 monooxygenase cyp2. Sequential glucosylation of the hydroxy fatty acid is probably catalyzed by the glycosyltransferase ugt1. The cellobiose lipid is further decorated by acetylation of the proximal glucose residue and by acylation with a short-chain beta-hydroxy fatty acid at the distal glucose residue. The acyltransferase uat1 may be a good candidate for catalyzing either acetylation or acylation of the cellobiose lipid. The fatty acid synthase fas2 may be involved in synthesis of the carbon backbone of the short-chain beta-hydroxy fatty acid esterified to the cellobiose disaccharide. The secreted UA consists of a mixture of both alpha-hydroxylated and non-hydroxylated glycolipids; therefore, alpha-hydroxylation of the long-chain fatty, catalyzed by the fatty acid hydroxylase ahd1, occurs late in UA biosynthesis and may be the last step before secretion. The polypeptide is Cytochrome P450 monooxygenase cyp1 (Mycosarcoma maydis (Corn smut fungus)).